A 570-amino-acid chain; its full sequence is Proline--tRNA ligase (570 aa).

This sequence belongs to the class-II aminoacyl-tRNA synthetase family. ProS type 1 subfamily. In terms of assembly, homodimer.

Its subcellular location is the cytoplasm. The enzyme catalyses tRNA(Pro) + L-proline + ATP = L-prolyl-tRNA(Pro) + AMP + diphosphate. In terms of biological role, catalyzes the attachment of proline to tRNA(Pro) in a two-step reaction: proline is first activated by ATP to form Pro-AMP and then transferred to the acceptor end of tRNA(Pro). As ProRS can inadvertently accommodate and process non-cognate amino acids such as alanine and cysteine, to avoid such errors it has two additional distinct editing activities against alanine. One activity is designated as 'pretransfer' editing and involves the tRNA(Pro)-independent hydrolysis of activated Ala-AMP. The other activity is designated 'posttransfer' editing and involves deacylation of mischarged Ala-tRNA(Pro). The misacylated Cys-tRNA(Pro) is not edited by ProRS. The sequence is that of Proline--tRNA ligase from Shewanella oneidensis (strain ATCC 700550 / JCM 31522 / CIP 106686 / LMG 19005 / NCIMB 14063 / MR-1).